Consider the following 855-residue polypeptide: Inactive rhomboid protein 1 (855 aa).

The disordered stretch occupies residues 1 to 36 (MSEARRDSTSSLQRKKPPWLKLDIPSAAPPAAEEPS). Residues 1 to 411 (MSEARRDSTS…HRPFFTYWLT (411 aa)) lie on the Cytoplasmic side of the membrane. A compositionally biased stretch (low complexity) spans 25–36 (PSAAPPAAEEPS). Serine 76 and serine 176 each carry phosphoserine. Threonine 180 and threonine 183 each carry phosphothreonine. At serine 390 the chain carries Phosphoserine. The chain crosses the membrane as a helical span at residues 412–432 (FVHSLVTVLAVCIYGIAPVGF). Residues 433-655 (SQHETVDSVL…NPEVPDQFYR (223 aa)) lie on the Lumenal side of the membrane. The N-linked (GlcNAc...) asparagine glycan is linked to asparagine 583. Residues 656 to 676 (LWLSLFLHAGILHCLVSICFQ) form a helical membrane-spanning segment. Residues 677 to 691 (MTVLRDLEKLAGWHR) lie on the Cytoplasmic side of the membrane. Residues 692–712 (IAIIYLLSGVTGNLASAIFLP) form a helical membrane-spanning segment. Residues 713–714 (YR) lie on the Lumenal side of the membrane. A helical membrane pass occupies residues 715–735 (AEVGPAGSQFGILACLFVELF). The Cytoplasmic segment spans residues 736-746 (QSWQILARPWR). A helical membrane pass occupies residues 747-767 (AFFKLLAVVLFLFTFGLLPWI). At 768–772 (DNFAH) the chain is on the lumenal side. The chain crosses the membrane as a helical span at residues 773 to 793 (ISGFISGLFLSFAFLPYISFG). At 794–803 (KFDLYRKRCQ) the chain is on the cytoplasmic side. A helical membrane pass occupies residues 804 to 824 (IIVFQVVFLGLLAGLVVLFYF). The Lumenal portion of the chain corresponds to 825–855 (YPVRCEWCEFLTCIPFTDKFCEKYELDAQLH).

It belongs to the peptidase S54 family. As to quaternary structure, homodimer, or homooligomer. Interacts with TGFA and HBEGF. Interacts with EGF; may retain EGF in the endoplasmic reticulum and regulates its degradation through the endoplasmic reticulum-associated degradation (ERAD). Interacts (via cytoplasmic N-terminus) with FRMD8/iTAP; this interaction leads to mutual protein stabilization. Interacts with ADAM17/TACE.

It localises to the endoplasmic reticulum membrane. Its subcellular location is the golgi apparatus membrane. In terms of biological role, regulates ADAM17 protease, a sheddase of the epidermal growth factor (EGF) receptor ligands and TNF, thereby plays a role in sleep, cell survival, proliferation, migration and inflammation. Does not exhibit any protease activity on its own. The protein is Inactive rhomboid protein 1 (RHBDF1) of Plecturocebus moloch (Dusky titi monkey).